We begin with the raw amino-acid sequence, 267 residues long: Kallikrein-14 (267 aa).

Positions 1-34 (MSLRVLGSGTWPSAPKMFLLLTALQVLAIAMTQS) are cleaved as a signal peptide. A propeptide spans 35 to 40 (QEDENK) (activation peptide). Residues 41-265 (IIGGHTCTRS…YRSWIEETMR (225 aa)) form the Peptidase S1 domain. Cystine bridges form between cysteine 47/cysteine 180, cysteine 68/cysteine 84, cysteine 159/cysteine 226, cysteine 191/cysteine 205, and cysteine 216/cysteine 241. Catalysis depends on charge relay system residues histidine 83 and aspartate 127. Serine 220 serves as the catalytic Charge relay system.

It belongs to the peptidase S1 family. Kallikrein subfamily. In terms of processing, proteolytic cleavage of the activation peptide produces the active enzyme. In terms of tissue distribution, highly expressed in CNS, bone marrow and fetal liver. Also expressed in breast, thyroid, kidney, colon, pancreas, spleen, prostate, uterus, small intestine, placenta and skeletal muscle. Among 40 tissues tested, the highest expression is detected in skin followed by breast and prostate (at protein level). Expressed in stratum corneum by sweat ducts and sweat glands and detected in sweat (at protein level).

It is found in the secreted. The protein localises to the extracellular space. Inhibited by SERPINA1, SERPINC1, SERPINE1, SERPINF2, aprotinin, soybean, trypsin inhibitor and leupeptin. Inhibited by serine protease inhibitor SPINK5. Has an autoproteolytic activity which may have a regulatory effect. Activated by citrate and inhibited by zinc and to a lower extent by manganese. Serine-type endopeptidase with a dual trypsin-like and chymotrypsin-like substrate specificity. May activate/inactivate the proteinase-activated receptors F2R, F2RL1 and F2RL3 and other kallikreins including KLK1, KLK3, KLK5 and KLK11. May function in seminal clot liquefaction through direct cleavage of the semenogelin SEMG1 and SEMG2 and activation of KLK3. May function through desmoglein DSG1 cleavage in epidermal desquamation a process by which the most superficial corneocytes are shed from the skin surface. May be involved in several aspects of tumor progression including growth, invasion and angiogenesis. This chain is Kallikrein-14 (KLK14), found in Homo sapiens (Human).